Consider the following 357-residue polypeptide: Quinolinate synthase (357 aa).

Iminosuccinate contacts are provided by histidine 50 and serine 71. Cysteine 116 serves as a coordination point for [4Fe-4S] cluster. Iminosuccinate-binding positions include 142-144 (YAN) and serine 159. Cysteine 203 contributes to the [4Fe-4S] cluster binding site. Residues 229–231 (HPE) and threonine 246 contribute to the iminosuccinate site. Cysteine 300 provides a ligand contact to [4Fe-4S] cluster.

The protein belongs to the quinolinate synthase family. Type 1 subfamily. The cofactor is [4Fe-4S] cluster.

The protein resides in the cytoplasm. It carries out the reaction iminosuccinate + dihydroxyacetone phosphate = quinolinate + phosphate + 2 H2O + H(+). It participates in cofactor biosynthesis; NAD(+) biosynthesis; quinolinate from iminoaspartate: step 1/1. Functionally, catalyzes the condensation of iminoaspartate with dihydroxyacetone phosphate to form quinolinate. This Shewanella sp. (strain MR-4) protein is Quinolinate synthase.